The chain runs to 336 residues: Alpha-N-acetylgalactosaminide alpha-2,6-sialyltransferase 5 (336 aa).

The Cytoplasmic segment spans residues 1–8 (MKTLMRHG). A helical; Signal-anchor for type II membrane protein membrane pass occupies residues 9 to 29 (LAVCLALTTMCTSLLLVYSSL). The Lumenal portion of the chain corresponds to 30–336 (GGQKERPPQQ…INHPENKPVF (307 aa)). The segment at 32 to 81 (QKERPPQQQQQQQQQQQQASATGSSQPAAESSTQQRPGVPAGPRPLDGYL) is disordered. The span at 38–49 (QQQQQQQQQQQQ) shows a compositional bias: low complexity. Residues 50–67 (ASATGSSQPAAESSTQQR) are compositionally biased toward polar residues. A disulfide bridge connects residues cysteine 96 and cysteine 245. Asparagine 137 and asparagine 161 each carry an N-linked (GlcNAc...) asparagine glycan.

The protein belongs to the glycosyltransferase 29 family.

Its subcellular location is the golgi apparatus membrane. It catalyses the reaction a ganglioside GM1b (d18:1(4E)) + CMP-N-acetyl-beta-neuraminate = a ganglioside GD1alpha (d18:1(4E)) + CMP + H(+). The enzyme catalyses N-acetyl-alpha-neuraminosyl-(2-&gt;3)-beta-D-galactosyl-(1-&gt;3)-N-acetyl-beta-D-glucosaminyl-(1-&gt;3)-beta-D-galactosyl-(1-&gt;4)-beta-D-glucosyl-(1&lt;-&gt;1')-N-acyl-sphing-4-enine + CMP-N-acetyl-beta-neuraminate = N-acetyl-alpha-neuraminosyl-(2-&gt;3)-beta-D-galactosyl-(1-&gt;3)-[N-acetyl-alpha-neuraminosyl-(2-&gt;6)]-N-acetyl-beta-D-glucosaminyl-(1-&gt;3)-beta-D-galactosyl-(1-&gt;4)-beta-D-glucosyl-(1&lt;-&gt;1')-N-acyl-sphing-4-enine + CMP + H(+). It participates in glycolipid biosynthesis. In terms of biological role, predominantly catalyzes the biosynthesis of ganglioside GD1alpha from GM1b in the brain, by transferring the sialyl group (N-acetyl-alpha-neuraminyl or NeuAc) from CMP-NeuAc to the GalNAc residue on the NeuAc-alpha-2,3-Gal-beta-1,3-GalNAc sequence of GM1b. GD1alpha is a critical molecule in the communication and interaction between neuronal cells and their supportive cells, particularly in brain tissues, and functions as an adhesion molecule in the process of metastasis. Also shows activity towards sialyl Lc4Cer (N-acetyl-alpha-neuraminosyl-(2-&gt;3)-beta-D-galactosyl-(1-&gt;3)-N-acetyl-beta-D-glucosaminyl-(1-&gt;3)-beta-D-galactosyl-(1-&gt;4)-beta-D-glucosyl-(1&lt;-&gt;1')-N-acyl-sphing-4-enine) generating disialyl Lc4Cer, which can lead to the synthesis of disialyl Lewis a (Le(a)), suggested to be a cancer-associated antigen. This is Alpha-N-acetylgalactosaminide alpha-2,6-sialyltransferase 5 (ST6GALNAC5) from Homo sapiens (Human).